Reading from the N-terminus, the 286-residue chain is 4-diphosphocytidyl-2-C-methyl-D-erythritol kinase (286 aa).

The active site involves K12. 96–106 (PHGAGLGGGSA) is an ATP binding site. Residue D138 is part of the active site.

Belongs to the GHMP kinase family. IspE subfamily.

It catalyses the reaction 4-CDP-2-C-methyl-D-erythritol + ATP = 4-CDP-2-C-methyl-D-erythritol 2-phosphate + ADP + H(+). The protein operates within isoprenoid biosynthesis; isopentenyl diphosphate biosynthesis via DXP pathway; isopentenyl diphosphate from 1-deoxy-D-xylulose 5-phosphate: step 3/6. Catalyzes the phosphorylation of the position 2 hydroxy group of 4-diphosphocytidyl-2C-methyl-D-erythritol. In Nitratidesulfovibrio vulgaris (strain DP4) (Desulfovibrio vulgaris), this protein is 4-diphosphocytidyl-2-C-methyl-D-erythritol kinase.